A 276-amino-acid polypeptide reads, in one-letter code: MKLCDFEVGLDQPLFLIAGPCVIESMQLQLDVAGKLKEITGKLGINFIFKSSFDKANRTSGTSFRGPGLEEGLKVLDAVKKQIGVPVLTDVHEYTPMNEVAAVVDVLQTPAFLVRQTDFIKNVCAAGKPVNIKKGQFLAPWDMKPVVDKAKSTGNEQIMVCERGASFGYNNLVSDMRSLSVMRDTGCPVVFDATHSVQLPGGQGSSSGGQREFVPVLARAAVAVGISGLFAETHPDPSKALSDGPNAWPLDRMEELLETLMELDAVTKKHGFARFA.

The protein belongs to the KdsA family.

It is found in the cytoplasm. The enzyme catalyses D-arabinose 5-phosphate + phosphoenolpyruvate + H2O = 3-deoxy-alpha-D-manno-2-octulosonate-8-phosphate + phosphate. The protein operates within carbohydrate biosynthesis; 3-deoxy-D-manno-octulosonate biosynthesis; 3-deoxy-D-manno-octulosonate from D-ribulose 5-phosphate: step 2/3. Its pathway is bacterial outer membrane biogenesis; lipopolysaccharide biosynthesis. In Xanthomonas campestris pv. campestris (strain 8004), this protein is 2-dehydro-3-deoxyphosphooctonate aldolase.